Consider the following 525-residue polypeptide: ATP synthase subunit alpha (525 aa).

169–176 lines the ATP pocket; that stretch reads GDRQTGKT.

It belongs to the ATPase alpha/beta chains family. F-type ATPases have 2 components, CF(1) - the catalytic core - and CF(0) - the membrane proton channel. CF(1) has five subunits: alpha(3), beta(3), gamma(1), delta(1), epsilon(1). CF(0) has three main subunits: a(1), b(2) and c(9-12). The alpha and beta chains form an alternating ring which encloses part of the gamma chain. CF(1) is attached to CF(0) by a central stalk formed by the gamma and epsilon chains, while a peripheral stalk is formed by the delta and b chains.

The protein localises to the cell membrane. The catalysed reaction is ATP + H2O + 4 H(+)(in) = ADP + phosphate + 5 H(+)(out). Produces ATP from ADP in the presence of a proton gradient across the membrane. The alpha chain is a regulatory subunit. In Mycoplasma mycoides subsp. mycoides SC (strain CCUG 32753 / NCTC 10114 / PG1), this protein is ATP synthase subunit alpha.